Here is a 102-residue protein sequence, read N- to C-terminus: Small ribosomal subunit protein uS10 (102 aa).

It belongs to the universal ribosomal protein uS10 family. In terms of assembly, part of the 30S ribosomal subunit.

In terms of biological role, involved in the binding of tRNA to the ribosomes. The chain is Small ribosomal subunit protein uS10 from Desulfitobacterium hafniense (strain DSM 10664 / DCB-2).